Consider the following 662-residue polypeptide: ABC transporter G family member 17 (662 aa).

The ABC transporter domain maps to 22 to 276 (LAFNDLTYNV…FSEFGSPIPE (255 aa)). Residue 69–76 (GASGAGKS) participates in ATP binding. The ABC transmembrane type-2 domain maps to 356–566 (VETVILAKRY…PYEAVLHNEF (211 aa)). A run of 6 helical transmembrane segments spans residues 375 to 395 (LIGTRVFIVMMTGFLLATVYW), 410 to 430 (FFSFAMATMFYSCADGLPAFI), 451 to 471 (VISHSLVTLPHLFALSIGFAA), 486 to 508 (FIYYLMIIFASFWSGCSFVTFVS), 514 to 536 (VMMSYMVTFGYLSYCLLFSGFYV), and 635 to 655 (LWVTLAWGFFFRILFYFSLLL).

The protein belongs to the ABC transporter superfamily. ABCG family. Eye pigment precursor importer (TC 3.A.1.204) subfamily.

The protein localises to the membrane. In Arabidopsis thaliana (Mouse-ear cress), this protein is ABC transporter G family member 17 (ABCG17).